The sequence spans 330 residues: Ketol-acid reductoisomerase (NADP(+)) (330 aa).

One can recognise a KARI N-terminal Rossmann domain in the interval 1-181 (MKVFYDSDFK…GLSRAGVIQT (181 aa)). Residues 24 to 27 (YGSQ), Arg-47, Ser-52, and 82 to 85 (DELQ) contribute to the NADP(+) site. His-107 is a catalytic residue. Gly-133 is an NADP(+) binding site. Residues 182–327 (TFKEETETDL…AKLRKMCGLE (146 aa)) enclose the KARI C-terminal knotted domain. The Mg(2+) site is built by Asp-190, Glu-194, Glu-226, and Glu-230. Ser-251 is a substrate binding site.

It belongs to the ketol-acid reductoisomerase family. Requires Mg(2+) as cofactor.

The enzyme catalyses (2R)-2,3-dihydroxy-3-methylbutanoate + NADP(+) = (2S)-2-acetolactate + NADPH + H(+). It carries out the reaction (2R,3R)-2,3-dihydroxy-3-methylpentanoate + NADP(+) = (S)-2-ethyl-2-hydroxy-3-oxobutanoate + NADPH + H(+). It participates in amino-acid biosynthesis; L-isoleucine biosynthesis; L-isoleucine from 2-oxobutanoate: step 2/4. Its pathway is amino-acid biosynthesis; L-valine biosynthesis; L-valine from pyruvate: step 2/4. In terms of biological role, involved in the biosynthesis of branched-chain amino acids (BCAA). Catalyzes an alkyl-migration followed by a ketol-acid reduction of (S)-2-acetolactate (S2AL) to yield (R)-2,3-dihydroxy-isovalerate. In the isomerase reaction, S2AL is rearranged via a Mg-dependent methyl migration to produce 3-hydroxy-3-methyl-2-ketobutyrate (HMKB). In the reductase reaction, this 2-ketoacid undergoes a metal-dependent reduction by NADPH to yield (R)-2,3-dihydroxy-isovalerate. The protein is Ketol-acid reductoisomerase (NADP(+)) of Methanococcus maripaludis (strain C5 / ATCC BAA-1333).